The following is a 446-amino-acid chain: 5-hydroxytryptamine receptor (446 aa).

At 1-65 (MEGAEGQEEL…AALVRAAAKA (65 aa)) the chain is on the extracellular side. N-linked (GlcNAc...) asparagine glycosylation is found at asparagine 23, asparagine 27, asparagine 36, and asparagine 42. A helical membrane pass occupies residues 66 to 88 (VVLGLLILATVVGNVFVIAAILL). Topologically, residues 89–98 (ERHLRSAANN) are cytoplasmic. The helical transmembrane segment at 99-120 (LILSLAVADLLVACLVMPLGAV) threads the bilayer. The Extracellular segment spans residues 121–135 (YEVVQRWTLGPELCD). Residues cysteine 134 and cysteine 214 are joined by a disulfide bond. The chain crosses the membrane as a helical span at residues 136 to 157 (MWTSGDVLCCTASILHLVAIAL). The Cytoplasmic segment spans residues 158-176 (DRYWAVTNIDYIHASTAKR). The helical transmembrane segment at 177–199 (VGMMIACVWTVSFFVCIAQLLGW) threads the bilayer. The Extracellular segment spans residues 200–227 (KDPDWNQRVSEDLRCVVSQDVGYQIFAT). A helical transmembrane segment spans residues 228–249 (ASSFYVPVLIILILYWRIYQTA). At 250–367 (RKRIRRRRGA…SKRERKAAKT (118 aa)) the chain is on the cytoplasmic side. Over residues 304–324 (TTTGFTNVSSNNTSPEKQSCA) the composition is skewed to polar residues. The segment at 304–329 (TTTGFTNVSSNNTSPEKQSCANGLEA) is disordered. Residues 368-391 (LAIITGAFVACWLPFFVLAILVPT) form a helical membrane-spanning segment. Residues 392–399 (CDCEVSPV) are Extracellular-facing. A helical membrane pass occupies residues 400-422 (LTSLSLWLGYFNSTLNPVIYTVF). Residues 423 to 446 (SPEFRHAFQRLLCGRRVRRRRAPQ) lie on the Cytoplasmic side of the membrane.

The protein belongs to the G-protein coupled receptor 1 family.

Its subcellular location is the cell membrane. Functionally, this is a receptor for 5-hydroxytryptamine (serotonin), a biogenic hormone that function as a neurotransmitter, a hormone, and a mitogen. This chain is 5-hydroxytryptamine receptor, found in Bombyx mori (Silk moth).